Consider the following 449-residue polypeptide: Probable phosphoglucosamine mutase (449 aa).

Residue S96 is the Phosphoserine intermediate of the active site. The Mg(2+) site is built by S96, D233, D235, and D237. At S96 the chain carries Phosphoserine.

It belongs to the phosphohexose mutase family. Mg(2+) is required as a cofactor. Post-translationally, activated by phosphorylation.

It catalyses the reaction alpha-D-glucosamine 1-phosphate = D-glucosamine 6-phosphate. In terms of biological role, catalyzes the conversion of glucosamine-6-phosphate to glucosamine-1-phosphate. The protein is Probable phosphoglucosamine mutase of Thermococcus gammatolerans (strain DSM 15229 / JCM 11827 / EJ3).